The sequence spans 124 residues: Max-like protein 1 (124 aa).

The segment covering 1–10 (MSDMSDLEDD) has biased composition (acidic residues). The disordered stretch occupies residues 1–44 (MSDMSDLEDDQTGHCGSGEHSGPFDPKRHAREQHNALERRRRDN). Positions 29-42 (HAREQHNALERRRR) are basic motif. A bHLH domain is found at 29 to 82 (HAREQHNALERRRRDNIKDMYTSLREVVPDANGERVQASRAVILKKAIESIEKG). The span at 32–44 (EQHNALERRRRDN) shows a compositional bias: basic and acidic residues. Residues 43–82 (DNIKDMYTSLREVVPDANGERVQASRAVILKKAIESIEKG) form a helix-loop-helix motif region. Residues 86–113 (SATLSVDVAEQESKNAKLREEIARLKAK) adopt a coiled-coil conformation.

The protein belongs to the MAX family. As to quaternary structure, heterodimer with mdl-1 in presence and absence of DNA. Interacts with tdpt-1; the interaction promotes axon regeneration after injury. In terms of tissue distribution, expressed in D-type motor neurons.

Its subcellular location is the nucleus. In terms of biological role, transcriptional regulator which binds to the E box motif 5'-CACGTG-3', when in a heterodimeric complex with mdl-1. Involved in the control of lifespan in response to dietary restriction, the decline in protein homeostasis associated with normal aging and may overlap with the insulin-like signaling pathway. Involved in promoting infection by the microsporidian pathogen N.parisii. Required for the expression of svh-2 and the promotion of axon regeneration after injury. The chain is Max-like protein 1 from Caenorhabditis elegans.